The following is a 100-amino-acid chain: Aspartyl/glutamyl-tRNA(Asn/Gln) amidotransferase subunit C (100 aa).

This sequence belongs to the GatC family. In terms of assembly, heterotrimer of A, B and C subunits.

The enzyme catalyses L-glutamyl-tRNA(Gln) + L-glutamine + ATP + H2O = L-glutaminyl-tRNA(Gln) + L-glutamate + ADP + phosphate + H(+). It carries out the reaction L-aspartyl-tRNA(Asn) + L-glutamine + ATP + H2O = L-asparaginyl-tRNA(Asn) + L-glutamate + ADP + phosphate + 2 H(+). Functionally, allows the formation of correctly charged Asn-tRNA(Asn) or Gln-tRNA(Gln) through the transamidation of misacylated Asp-tRNA(Asn) or Glu-tRNA(Gln) in organisms which lack either or both of asparaginyl-tRNA or glutaminyl-tRNA synthetases. The reaction takes place in the presence of glutamine and ATP through an activated phospho-Asp-tRNA(Asn) or phospho-Glu-tRNA(Gln). This Rickettsia peacockii (strain Rustic) protein is Aspartyl/glutamyl-tRNA(Asn/Gln) amidotransferase subunit C.